We begin with the raw amino-acid sequence, 404 residues long: Probable tRNA sulfurtransferase (404 aa).

The 106-residue stretch at 60–165 (QPIVEALKLV…DEAAYISYEE (106 aa)) folds into the THUMP domain. ATP contacts are provided by residues 183–184 (ML), 208–209 (HF), Arg265, Gly287, and Gln296.

It belongs to the ThiI family.

It localises to the cytoplasm. It catalyses the reaction [ThiI sulfur-carrier protein]-S-sulfanyl-L-cysteine + a uridine in tRNA + 2 reduced [2Fe-2S]-[ferredoxin] + ATP + H(+) = [ThiI sulfur-carrier protein]-L-cysteine + a 4-thiouridine in tRNA + 2 oxidized [2Fe-2S]-[ferredoxin] + AMP + diphosphate. The enzyme catalyses [ThiS sulfur-carrier protein]-C-terminal Gly-Gly-AMP + S-sulfanyl-L-cysteinyl-[cysteine desulfurase] + AH2 = [ThiS sulfur-carrier protein]-C-terminal-Gly-aminoethanethioate + L-cysteinyl-[cysteine desulfurase] + A + AMP + 2 H(+). It functions in the pathway cofactor biosynthesis; thiamine diphosphate biosynthesis. In terms of biological role, catalyzes the ATP-dependent transfer of a sulfur to tRNA to produce 4-thiouridine in position 8 of tRNAs, which functions as a near-UV photosensor. Also catalyzes the transfer of sulfur to the sulfur carrier protein ThiS, forming ThiS-thiocarboxylate. This is a step in the synthesis of thiazole, in the thiamine biosynthesis pathway. The sulfur is donated as persulfide by IscS. The protein is Probable tRNA sulfurtransferase of Streptococcus pyogenes serotype M12 (strain MGAS2096).